Consider the following 505-residue polypeptide: RNA-splicing ligase RtcB homolog (505 aa).

4 residues coordinate Mn(2+): aspartate 119, cysteine 122, histidine 227, and histidine 259. 226–230 (NHYAE) contacts GMP. At serine 300 the chain carries Phosphoserine. Histidine 353 is a Mn(2+) binding site. Residues 353 to 354 (HN), 402 to 405 (GGTM), serine 409, and 428 to 431 (HGAG) contribute to the GMP site. Catalysis depends on histidine 428, which acts as the GMP-histidine intermediate. Residue lysine 496 forms a Glycyl lysine isopeptide (Lys-Gly) (interchain with G-Cter in SUMO2) linkage. Position 504 (lysine 504) interacts with GMP.

The protein belongs to the RtcB family. Catalytic component of the tRNA-splicing ligase complex. Mn(2+) is required as a cofactor.

Its subcellular location is the nucleus. It is found in the cytoplasm. It carries out the reaction a 3'-end 3'-phospho-ribonucleotide-RNA + a 5'-end dephospho-ribonucleoside-RNA + GTP = a ribonucleotidyl-ribonucleotide-RNA + GMP + diphosphate. The catalysed reaction is a 3'-end 2',3'-cyclophospho-ribonucleotide-RNA + a 5'-end dephospho-ribonucleoside-RNA + GTP + H2O = a ribonucleotidyl-ribonucleotide-RNA + GMP + diphosphate + H(+). Catalytic subunit of the tRNA-splicing ligase complex that acts by directly joining spliced tRNA halves to mature-sized tRNAs by incorporating the precursor-derived splice junction phosphate into the mature tRNA as a canonical 3',5'-phosphodiester. May act as an RNA ligase with broad substrate specificity, and may function toward other RNAs. This Rattus norvegicus (Rat) protein is RNA-splicing ligase RtcB homolog.